The following is a 415-amino-acid chain: Squalene synthase 2 (415 aa).

Helical transmembrane passes span 281-301 (AIFR…ALCY) and 392-412 (LIVI…SNLP).

It belongs to the phytoene/squalene synthase family. It depends on Mg(2+) as a cofactor. Mn(2+) is required as a cofactor.

It localises to the endoplasmic reticulum membrane. It catalyses the reaction 2 (2E,6E)-farnesyl diphosphate + NADH + H(+) = squalene + 2 diphosphate + NAD(+). The catalysed reaction is 2 (2E,6E)-farnesyl diphosphate + NADPH + H(+) = squalene + 2 diphosphate + NADP(+). Its pathway is terpene metabolism; lanosterol biosynthesis; lanosterol from farnesyl diphosphate: step 1/3. In terms of biological role, component of the triterpene saponins (e.g. ginsenosides or panaxosides) and phytosterols biosynthetic pathways. Catalyzes the biosynthesis of squalene. This chain is Squalene synthase 2, found in Panax ginseng (Korean ginseng).